Consider the following 502-residue polypeptide: ATP synthase subunit alpha (502 aa).

169-176 (GDRQVGKT) contacts ATP.

This sequence belongs to the ATPase alpha/beta chains family. As to quaternary structure, F-type ATPases have 2 components, CF(1) - the catalytic core - and CF(0) - the membrane proton channel. CF(1) has five subunits: alpha(3), beta(3), gamma(1), delta(1), epsilon(1). CF(0) has three main subunits: a(1), b(2) and c(9-12). The alpha and beta chains form an alternating ring which encloses part of the gamma chain. CF(1) is attached to CF(0) by a central stalk formed by the gamma and epsilon chains, while a peripheral stalk is formed by the delta and b chains.

The protein resides in the cell membrane. It carries out the reaction ATP + H2O + 4 H(+)(in) = ADP + phosphate + 5 H(+)(out). Functionally, produces ATP from ADP in the presence of a proton gradient across the membrane. The alpha chain is a regulatory subunit. This is ATP synthase subunit alpha from Lysinibacillus sphaericus (strain C3-41).